The following is a 276-amino-acid chain: 2,3,4,5-tetrahydropyridine-2,6-dicarboxylate N-succinyltransferase (276 aa).

Arg-104 and Asp-141 together coordinate substrate.

The protein belongs to the transferase hexapeptide repeat family. As to quaternary structure, homotrimer.

The protein resides in the cytoplasm. It carries out the reaction (S)-2,3,4,5-tetrahydrodipicolinate + succinyl-CoA + H2O = (S)-2-succinylamino-6-oxoheptanedioate + CoA. The protein operates within amino-acid biosynthesis; L-lysine biosynthesis via DAP pathway; LL-2,6-diaminopimelate from (S)-tetrahydrodipicolinate (succinylase route): step 1/3. The sequence is that of 2,3,4,5-tetrahydropyridine-2,6-dicarboxylate N-succinyltransferase from Legionella pneumophila (strain Paris).